The sequence spans 240 residues: Ribosomal RNA large subunit methyltransferase E (240 aa).

Positions 1 to 13 (MAKKPGSQNTSGR) are enriched in polar residues. Residues 1 to 20 (MAKKPGSQNTSGRGQRDLKV) are disordered. Residues Gly85, Trp87, Asp113, Asp129, and Asp153 each coordinate S-adenosyl-L-methionine. Lys193 (proton acceptor) is an active-site residue.

It belongs to the class I-like SAM-binding methyltransferase superfamily. RNA methyltransferase RlmE family.

It localises to the cytoplasm. The enzyme catalyses uridine(2552) in 23S rRNA + S-adenosyl-L-methionine = 2'-O-methyluridine(2552) in 23S rRNA + S-adenosyl-L-homocysteine + H(+). Functionally, specifically methylates the uridine in position 2552 of 23S rRNA at the 2'-O position of the ribose in the fully assembled 50S ribosomal subunit. This chain is Ribosomal RNA large subunit methyltransferase E, found in Roseobacter denitrificans (strain ATCC 33942 / OCh 114) (Erythrobacter sp. (strain OCh 114)).